We begin with the raw amino-acid sequence, 492 residues long: E3 ubiquitin-protein ligase TRIM35 (492 aa).

Residue Met1 is modified to N-acetylmethionine. Residues Ser4 and Ser8 each carry the phosphoserine modification. The RING-type zinc finger occupies 21 to 61 (CAVCYDPFRDAVTLRCGHNFCRGCVSRCWEVQVSPTCPVCK). The segment at 96–137 (RFSRVCRLHRGQLSLFCLEDKELLCCSCQADPRHQGHRVQPV) adopts a B box-type zinc-finger fold. Positions 101, 104, 123, and 129 each coordinate Zn(2+). Residues 210 to 249 (AEETRQKQLLADEKMKQLTEETEVLAHEIERLQMEMKEDD) are a coiled coil. The region spanning 283–486 (YLGSLQYRVW…LRICPLHISV (204 aa)) is the B30.2/SPRY domain.

In terms of assembly, interacts with PKM isoform M2, but not isoform M1; this interaction may compete with that between PKM and FGFR1, and hence reduces FGFR1-dependent tyrosine phosphorylation of PKM. Interacts with IRF7; this interaction promotes IRF7 proteasomal degradation. Interacts with TRAF3; this interaction promotes TRAF3 activation.

Its subcellular location is the cytoplasm. It is found in the nucleus. It carries out the reaction S-ubiquitinyl-[E2 ubiquitin-conjugating enzyme]-L-cysteine + [acceptor protein]-L-lysine = [E2 ubiquitin-conjugating enzyme]-L-cysteine + N(6)-ubiquitinyl-[acceptor protein]-L-lysine.. It functions in the pathway protein modification; protein ubiquitination. In terms of biological role, E3 ubiquitin-protein ligase that participates in multiple biological processes including cell death, glucose metabolism, and in particular, the innate immune response. Mediates 'Lys-63'-linked polyubiquitination of TRAF3 thereby promoting type I interferon production via RIG-I signaling pathway. Can also catalyze 'Lys-48'-linked polyubiquitination and proteasomal degradation of viral proteins such as influenza virus PB2. Acts as a negative feedback regulator of TLR7- and TLR9-triggered signaling. Mechanistically, promotes the 'Lys-48'-linked ubiquitination of IRF7 and induces its degradation via a proteasome-dependent pathway. Reduces FGFR1-dependent tyrosine phosphorylation of PKM, inhibiting PKM-dependent lactate production, glucose metabolism, and cell growth. This Pongo abelii (Sumatran orangutan) protein is E3 ubiquitin-protein ligase TRIM35 (TRIM35).